Here is a 242-residue protein sequence, read N- to C-terminus: Ribonuclease PH (242 aa).

Phosphate is bound by residues R86 and 124 to 126 (GTR).

Belongs to the RNase PH family. Homohexameric ring arranged as a trimer of dimers.

The catalysed reaction is tRNA(n+1) + phosphate = tRNA(n) + a ribonucleoside 5'-diphosphate. Its function is as follows. Phosphorolytic 3'-5' exoribonuclease that plays an important role in tRNA 3'-end maturation. Removes nucleotide residues following the 3'-CCA terminus of tRNAs; can also add nucleotides to the ends of RNA molecules by using nucleoside diphosphates as substrates, but this may not be physiologically important. Probably plays a role in initiation of 16S rRNA degradation (leading to ribosome degradation) during starvation. The chain is Ribonuclease PH from Photorhabdus laumondii subsp. laumondii (strain DSM 15139 / CIP 105565 / TT01) (Photorhabdus luminescens subsp. laumondii).